A 193-amino-acid polypeptide reads, in one-letter code: Peptidyl-tRNA hydrolase (193 aa).

Tyr14 lines the tRNA pocket. His19 (proton acceptor) is an active-site residue. Phe64, Asn66, and Asn112 together coordinate tRNA.

Belongs to the PTH family. Monomer.

It is found in the cytoplasm. It catalyses the reaction an N-acyl-L-alpha-aminoacyl-tRNA + H2O = an N-acyl-L-amino acid + a tRNA + H(+). Functionally, hydrolyzes ribosome-free peptidyl-tRNAs (with 1 or more amino acids incorporated), which drop off the ribosome during protein synthesis, or as a result of ribosome stalling. Its function is as follows. Catalyzes the release of premature peptidyl moieties from peptidyl-tRNA molecules trapped in stalled 50S ribosomal subunits, and thus maintains levels of free tRNAs and 50S ribosomes. The chain is Peptidyl-tRNA hydrolase from Bartonella henselae (strain ATCC 49882 / DSM 28221 / CCUG 30454 / Houston 1) (Rochalimaea henselae).